The chain runs to 468 residues: Immunoglobulin superfamily member 21 (468 aa).

The N-terminal stretch at 1–24 (MQAAPSLRRASCLLLAAILDLARG) is a signal peptide. The 108-residue stretch at 25–132 (YLTVNIEPLP…RATREKVVLA (108 aa)) folds into the Ig-like 1 domain. Cysteine 46 and cysteine 116 form a disulfide bridge. N-linked (GlcNAc...) asparagine glycosylation is found at asparagine 82, asparagine 165, and asparagine 407. One can recognise an Ig-like 2 domain in the interval 344-429 (PKIMMTPSRA…GSTDTHTRLI (86 aa)).

As to quaternary structure, interacts (Ig-like 1 domain) with NRXN2 (via Laminin G-like 1 domain) in a trans-interaction manner. Expressed in brain (at protein levels). Highly expressed in the pyramidal cell layer of the dorsal and ventral hippocampal CA1 and CA3 regions, layers 5 and 6 of the cortex, the thalamus and the pons and weakly expressed in the cerebellum. Expressed in neurons but not in glia.

The protein resides in the postsynaptic cell membrane. Involved in synaptic inhibition in the brain. Selectively regulates inhibitory presynaptic differentiation through interacting with presynaptic NRXN2. The polypeptide is Immunoglobulin superfamily member 21 (Igsf21) (Mus musculus (Mouse)).